A 337-amino-acid polypeptide reads, in one-letter code: Ferredoxin--NADP reductase (337 aa).

The FAD site is built by aspartate 35, glutamine 43, tyrosine 48, alanine 88, phenylalanine 122, aspartate 289, and threonine 330.

This sequence belongs to the ferredoxin--NADP reductase type 2 family. Homodimer. FAD is required as a cofactor.

The enzyme catalyses 2 reduced [2Fe-2S]-[ferredoxin] + NADP(+) + H(+) = 2 oxidized [2Fe-2S]-[ferredoxin] + NADPH. The polypeptide is Ferredoxin--NADP reductase (Ehrlichia ruminantium (strain Welgevonden)).